The chain runs to 193 residues: GTP cyclohydrolase-2 (193 aa).

GTP is bound at residue 45-49 (RIHSE). Zn(2+) contacts are provided by cysteine 50, cysteine 61, and cysteine 63. Residues glutamine 66, 87–89 (EGR), and threonine 109 contribute to the GTP site. Aspartate 121 acts as the Proton acceptor in catalysis. Residue arginine 123 is the Nucleophile of the active site. Positions 144 and 149 each coordinate GTP.

It belongs to the GTP cyclohydrolase II family. Requires Zn(2+) as cofactor.

The enzyme catalyses GTP + 4 H2O = 2,5-diamino-6-hydroxy-4-(5-phosphoribosylamino)-pyrimidine + formate + 2 phosphate + 3 H(+). Its pathway is cofactor biosynthesis; riboflavin biosynthesis; 5-amino-6-(D-ribitylamino)uracil from GTP: step 1/4. Catalyzes the conversion of GTP to 2,5-diamino-6-ribosylamino-4(3H)-pyrimidinone 5'-phosphate (DARP), formate and pyrophosphate. This is GTP cyclohydrolase-2 from Campylobacter hominis (strain ATCC BAA-381 / DSM 21671 / CCUG 45161 / LMG 19568 / NCTC 13146 / CH001A).